A 419-amino-acid chain; its full sequence is L-rhamnose isomerase (419 aa).

3 residues coordinate Mn(2+): H262, D294, and D296.

This sequence belongs to the rhamnose isomerase family. In terms of assembly, homotetramer. Mn(2+) is required as a cofactor.

The protein localises to the cytoplasm. It catalyses the reaction L-rhamnopyranose = L-rhamnulose. The protein operates within carbohydrate degradation; L-rhamnose degradation; glycerone phosphate from L-rhamnose: step 1/3. In terms of biological role, catalyzes the interconversion of L-rhamnose and L-rhamnulose. The chain is L-rhamnose isomerase from Escherichia coli O7:K1 (strain IAI39 / ExPEC).